We begin with the raw amino-acid sequence, 61 residues long: MDPNCSCVAGDSCTCAGSCKCKECKCTSCKKSCCSCCPVGCAKCAQGCICKGASDKCNCCA.

Residue M1 is modified to N-acetylmethionine. The interval 1–29 (MDPNCSCVAGDSCTCAGSCKCKECKCTSC) is beta. The a divalent metal cation site is built by C5, C7, C13, C15, C19, C21, C24, C26, C29, C33, C34, C36, C37, C41, C44, C48, C50, C57, C59, and C60. An antigenic epitope region spans residues 20–25 (KCKECK). The tract at residues 30 to 61 (KKSCCSCCPVGCAKCAQGCICKGASDKCNCCA) is alpha.

Belongs to the metallothionein superfamily. Type 1 family.

Metallothioneins have a high content of cysteine residues that bind various heavy metals; these proteins are transcriptionally regulated by both heavy metals and glucocorticoids. The protein is Metallothionein-2 (MT2) of Macaca fascicularis (Crab-eating macaque).